We begin with the raw amino-acid sequence, 737 residues long: MEDPLSSYKLIKDLRSGGEGKAILYEKDGVKYVGKKRLFDNLKDANQGLKEAMSLARIVHPNTVRFEDAIMTQIGDQIEITIMMEFCEMGDLLDFLIELSEPQHHHTVTLGSELSSLNLGSEYTGSDIDSTTSRTSSSSSTNFEAALLLENNNNNTIQHSHSSSSLVNGTTSPTNATTPPITTTTPNNRHSISTPTLAGTTTATTASPSSPSSPSSPSSPSSPSSPLSPQQHPVTSPQRKSSKSERKKKCSLKERKCIVKMTVDLTKKIFKKDNSNHTTAATTTTTTNTTHSSSSSSNLNIEEHVIHSNEIKKGVDSIYLIEQTQLIEWLLDLSYGVQALHRASMIHRDLKSENIFISGSNKLKIGDFGLAIQSAHHTGSIHSETVGTYCYSSPEILNSTYDKTTDIFSLGCIFYELITLKLLSHNRIYLGEDMLNDRFDSMQFLSTFPEKYEKLAPLVLSMISKNPTFRPSIESIIETLQKMDTSLLKERVVIKRENTIKGIRKQLDKSHFQEASLLLATSFVKDPRFFNIFPPSDPHSIPHLQHLYKYILKVLSSYNCSIWGYFAIDGTMVSCFVWLNPEKKKEIRLSDCIKGSLSLVTKIGLKRVGLILDLMRFDDNILSMAQNNNNNPNTSTSNLQTFKGSSSSSSSSCNHWFLAYCCTSEIFRGNGIGSHMIENVLNWADHNGVETRTVVFENNSIEFFQHHGFEVGSEFKSNLPKGVNKVMVLVRKPKQIY.

Residues 8-488 (YKLIKDLRSG…TLQKMDTSLL (481 aa)) enclose the Protein kinase domain. ATP contacts are provided by residues 14–22 (LRSGGEGKA) and K36. 2 disordered regions span residues 155 to 251 (NTIQ…KKCS) and 278 to 298 (TTAA…SSSN). The span at 156–167 (TIQHSHSSSSLV) shows a compositional bias: polar residues. A compositionally biased stretch (low complexity) spans 168-229 (NGTTSPTNAT…PSSPSSPLSP (62 aa)). Catalysis depends on D349, which acts as the Proton acceptor.

Belongs to the protein kinase superfamily. NEK Ser/Thr protein kinase family. NIMA subfamily.

The catalysed reaction is L-seryl-[protein] + ATP = O-phospho-L-seryl-[protein] + ADP + H(+). It carries out the reaction L-threonyl-[protein] + ATP = O-phospho-L-threonyl-[protein] + ADP + H(+). The protein is Probable serine/threonine-protein kinase DDB_G0269628 of Dictyostelium discoideum (Social amoeba).